The chain runs to 1342 residues: DNA-directed RNA polymerase subunit beta (1342 aa).

Belongs to the RNA polymerase beta chain family. In terms of assembly, the RNAP catalytic core consists of 2 alpha, 1 beta, 1 beta' and 1 omega subunit. When a sigma factor is associated with the core the holoenzyme is formed, which can initiate transcription.

The enzyme catalyses RNA(n) + a ribonucleoside 5'-triphosphate = RNA(n+1) + diphosphate. In terms of biological role, DNA-dependent RNA polymerase catalyzes the transcription of DNA into RNA using the four ribonucleoside triphosphates as substrates. The polypeptide is DNA-directed RNA polymerase subunit beta (Buchnera aphidicola subsp. Schizaphis graminum (strain Sg)).